Reading from the N-terminus, the 912-residue chain is Bifunctional uridylyltransferase/uridylyl-removing enzyme (912 aa).

The segment at 1–369 (MLPRIANQRA…FFASLRSRRK (369 aa)) is uridylyltransferase. A uridylyl-removing region spans residues 370–722 (KVGPFFIEGG…AHWYPARGAT (353 aa)). Residues 486-608 (VDEHTIRAIG…VQSQERLRLL (123 aa)) form the HD domain. 2 consecutive ACT domains span residues 723–802 (LVTV…LVPQ) and 834–912 (VIEV…KDAA).

It belongs to the GlnD family. The cofactor is Mg(2+).

It catalyses the reaction [protein-PII]-L-tyrosine + UTP = [protein-PII]-uridylyl-L-tyrosine + diphosphate. It carries out the reaction [protein-PII]-uridylyl-L-tyrosine + H2O = [protein-PII]-L-tyrosine + UMP + H(+). Its activity is regulated as follows. Uridylyltransferase (UTase) activity is inhibited by glutamine, while glutamine activates uridylyl-removing (UR) activity. Modifies, by uridylylation and deuridylylation, the PII regulatory proteins (GlnB and homologs), in response to the nitrogen status of the cell that GlnD senses through the glutamine level. Under low glutamine levels, catalyzes the conversion of the PII proteins and UTP to PII-UMP and PPi, while under higher glutamine levels, GlnD hydrolyzes PII-UMP to PII and UMP (deuridylylation). Thus, controls uridylylation state and activity of the PII proteins, and plays an important role in the regulation of nitrogen assimilation and metabolism. The protein is Bifunctional uridylyltransferase/uridylyl-removing enzyme of Novosphingobium aromaticivorans (strain ATCC 700278 / DSM 12444 / CCUG 56034 / CIP 105152 / NBRC 16084 / F199).